Here is a 388-residue protein sequence, read N- to C-terminus: MGKKAIQFGGGNIGRGFVAEFLHKAGYEVVFVDVMDKMVEALQQNKSYKVTEVSEEGEHTTTITNYRAINSKTHESDVIQEIATADVVTCAVGPNILKFIAPVIAKGIDARTESKPVAVIACENAIGATDTLHGFIKQHTSQDRVESLYDRAQFANSAIDRIVPQQAPNSGLDVRIEKFYEWAVEKTPFGSVGHPDIPAIHWVDNLEPYIERKLFTVNTSHATTAYFGHFRGKKMIADALEDKEIRGLVHKVLEETASLIVAKHDISEEEQKEYVEKIVSRISNPYLEDNVDRVGRAPLRKLSRKERFIGPASQLAERGMKYDSLMDAVEMALRFQNVPGDDESAELANILQEQPAEDATTNLTGLEKEHPLYPAVLDRVRKVQQGTK.

An NAD(+)-binding site is contributed by 5–16 (AIQFGGGNIGRG). Lys213 is an active-site residue.

The protein belongs to the mannitol dehydrogenase family. Monomer.

The catalysed reaction is D-mannitol 1-phosphate + NAD(+) = beta-D-fructose 6-phosphate + NADH + H(+). Catalyzes the NAD(H)-dependent interconversion of D-fructose 6-phosphate and D-mannitol 1-phosphate in the metabolism of mannitol. Has a strong preference for NADH over NADPH. The polypeptide is Mannitol-1-phosphate 5-dehydrogenase (mpdA) (Aspergillus niger (strain ATCC MYA-4892 / CBS 513.88 / FGSC A1513)).